The sequence spans 185 residues: dCTP deaminase, dUMP-forming (185 aa).

DCTP-binding positions include 99–104 (KSSIAR), Asp-117, 125–127 (TLE), Gln-146, Tyr-159, Lys-166, and Gln-170. Residue Glu-127 is the Proton donor/acceptor of the active site.

The protein belongs to the dCTP deaminase family. As to quaternary structure, homotrimer.

The enzyme catalyses dCTP + 2 H2O = dUMP + NH4(+) + diphosphate. It functions in the pathway pyrimidine metabolism; dUMP biosynthesis; dUMP from dCTP: step 1/1. Bifunctional enzyme that catalyzes both the deamination of dCTP to dUTP and the hydrolysis of dUTP to dUMP without releasing the toxic dUTP intermediate. This is dCTP deaminase, dUMP-forming from Methanospirillum hungatei JF-1 (strain ATCC 27890 / DSM 864 / NBRC 100397 / JF-1).